The primary structure comprises 304 residues: tRNA-uridine aminocarboxypropyltransferase 1 (304 aa).

Disordered stretches follow at residues 1–29 and 165–193; these read MALSPSVVPQESKEDNANCVETKPSQTTS and RNKADNLDVPPRKLKRTTDEEGWDLHEST. Residues 180–193 are compositionally biased toward basic and acidic residues; the sequence is RTTDEEGWDLHEST. A DXTW motif is present at residues 206 to 209; sequence DSTW.

This sequence belongs to the TDD superfamily. DTWD1 family.

The protein localises to the nucleus. The catalysed reaction is a uridine in tRNA + S-adenosyl-L-methionine = a 3-[(3S)-3-amino-3-carboxypropyl]uridine in tRNA + S-methyl-5'-thioadenosine + H(+). Its function is as follows. Catalyzes the formation of 3-(3-amino-3-carboxypropyl)uridine (acp3U) at position 20 in the D-loop of several cytoplasmic tRNAs (acp3U(20)). The protein is tRNA-uridine aminocarboxypropyltransferase 1 of Mus musculus (Mouse).